The following is a 479-amino-acid chain: Ribosomal RNA small subunit methyltransferase F (479 aa).

Residues 125-131 (AAAPGSK), Glu-149, Asp-176, and Asp-194 each bind S-adenosyl-L-methionine. Cys-247 serves as the catalytic Nucleophile.

This sequence belongs to the class I-like SAM-binding methyltransferase superfamily. RsmB/NOP family.

The protein resides in the cytoplasm. It catalyses the reaction cytidine(1407) in 16S rRNA + S-adenosyl-L-methionine = 5-methylcytidine(1407) in 16S rRNA + S-adenosyl-L-homocysteine + H(+). Functionally, specifically methylates the cytosine at position 1407 (m5C1407) of 16S rRNA. This is Ribosomal RNA small subunit methyltransferase F from Escherichia coli O139:H28 (strain E24377A / ETEC).